The primary structure comprises 670 residues: DNA ligase (670 aa).

NAD(+) contacts are provided by residues 32-36 (DSEYD), 81-82 (SL), and E114. Residue K116 is the N6-AMP-lysine intermediate of the active site. NAD(+)-binding residues include R137, E174, K291, and K315. Positions 409, 412, 427, and 433 each coordinate Zn(2+). In terms of domain architecture, BRCT spans 592–670 (ASENLFKDKT…EEEFLAQITR (79 aa)).

This sequence belongs to the NAD-dependent DNA ligase family. LigA subfamily. Requires Mg(2+) as cofactor. Mn(2+) serves as cofactor.

The enzyme catalyses NAD(+) + (deoxyribonucleotide)n-3'-hydroxyl + 5'-phospho-(deoxyribonucleotide)m = (deoxyribonucleotide)n+m + AMP + beta-nicotinamide D-nucleotide.. Its function is as follows. DNA ligase that catalyzes the formation of phosphodiester linkages between 5'-phosphoryl and 3'-hydroxyl groups in double-stranded DNA using NAD as a coenzyme and as the energy source for the reaction. It is essential for DNA replication and repair of damaged DNA. This is DNA ligase from Haemophilus influenzae (strain PittEE).